We begin with the raw amino-acid sequence, 446 residues long: Methylenetetrahydrofolate--tRNA-(uracil-5-)-methyltransferase TrmFO (446 aa).

An FAD-binding site is contributed by 9–14; it reads GGGMAG.

This sequence belongs to the MnmG family. TrmFO subfamily. Requires FAD as cofactor.

It is found in the cytoplasm. It catalyses the reaction uridine(54) in tRNA + (6R)-5,10-methylene-5,6,7,8-tetrahydrofolate + NADH + H(+) = 5-methyluridine(54) in tRNA + (6S)-5,6,7,8-tetrahydrofolate + NAD(+). It carries out the reaction uridine(54) in tRNA + (6R)-5,10-methylene-5,6,7,8-tetrahydrofolate + NADPH + H(+) = 5-methyluridine(54) in tRNA + (6S)-5,6,7,8-tetrahydrofolate + NADP(+). In terms of biological role, catalyzes the folate-dependent formation of 5-methyl-uridine at position 54 (M-5-U54) in all tRNAs. This is Methylenetetrahydrofolate--tRNA-(uracil-5-)-methyltransferase TrmFO from Ruegeria sp. (strain TM1040) (Silicibacter sp.).